We begin with the raw amino-acid sequence, 805 residues long: Leucine--tRNA ligase (805 aa).

Positions 40 to 51 (PYPSGAGLHVGH) match the 'HIGH' region motif. The 'KMSKS' region signature appears at 576–580 (KMSKS). Lys579 contacts ATP.

The protein belongs to the class-I aminoacyl-tRNA synthetase family.

The protein resides in the cytoplasm. The enzyme catalyses tRNA(Leu) + L-leucine + ATP = L-leucyl-tRNA(Leu) + AMP + diphosphate. In Anoxybacillus flavithermus (strain DSM 21510 / WK1), this protein is Leucine--tRNA ligase.